The chain runs to 198 residues: Holliday junction branch migration complex subunit RuvA (198 aa).

The segment at 1-63 (MYDYIKGQLT…EDAHLLFGFH (63 aa)) is domain I. Residues 64 to 142 (TEDEKDVFLK…EAPQETGNTK (79 aa)) are domain II. Positions 143–147 (ARSNK) are flexible linker. The domain III stretch occupies residues 148-198 (AGNTQLDEAIEALLALGYKATELKKIRAFFEGTSETAEQYIKSALKLLMKG).

The protein belongs to the RuvA family. In terms of assembly, homotetramer. Forms an RuvA(8)-RuvB(12)-Holliday junction (HJ) complex. HJ DNA is sandwiched between 2 RuvA tetramers; dsDNA enters through RuvA and exits via RuvB. An RuvB hexamer assembles on each DNA strand where it exits the tetramer. Each RuvB hexamer is contacted by two RuvA subunits (via domain III) on 2 adjacent RuvB subunits; this complex drives branch migration. In the full resolvosome a probable DNA-RuvA(4)-RuvB(12)-RuvC(2) complex forms which resolves the HJ.

It localises to the cytoplasm. Its function is as follows. The RuvA-RuvB-RuvC complex processes Holliday junction (HJ) DNA during genetic recombination and DNA repair, while the RuvA-RuvB complex plays an important role in the rescue of blocked DNA replication forks via replication fork reversal (RFR). RuvA specifically binds to HJ cruciform DNA, conferring on it an open structure. The RuvB hexamer acts as an ATP-dependent pump, pulling dsDNA into and through the RuvAB complex. HJ branch migration allows RuvC to scan DNA until it finds its consensus sequence, where it cleaves and resolves the cruciform DNA. The protein is Holliday junction branch migration complex subunit RuvA of Streptococcus pyogenes serotype M12 (strain MGAS2096).